We begin with the raw amino-acid sequence, 1582 residues long: MCERGFARRREEVTGLNRITEKGLKDICKRDKLYQTPRLNDVLYLHFQGYQCIENLDEYTELKSLWLESNAISEIQNLTKLTKLKCLYLQNNLITKMENLEFNRELDTLNLSQNHIRKIENIGTDILPVLNTLNITSNYLTDSASLAALVECKTLSVLDLSNNRIDDILIVKIFEQMPSLKVLVLQGNPVVSRLPQYRKTLILACKELTYLDSRPVFPRDRACAEAWKREGYEGERKEVQRWNRAERRKTRESVNSTIRMRNRHLKPEDQVPLLTSSDSEEEQKGISSAEKAQKRAEMEYGSVDTMWDEVSGESQASEHSTTSSTSAEDNESAGSQADHIAERISNRRVKPLEGRPKVLYDEAASGDEKAVTTTDSKKDSNAEDLPELKDITEALLQSDTASKPPLQPTLLQSDSGSEMDNTADLEQTCQTLLQVAQGNDDGDPTPKQIKSQMIDEMYESFGSDLFEEHPLPIDQLLNESTKKYQLEAKVCCEEETTKTPRDLYKEFIEEVTWRPKSKEQLEREQECVDASEKCAHDLAEMGSHLEEDLQELRDFTENLSSDVQEQAKDPSESDEEPTEEEMEVKSQLLKEQFQDRKKRLKEAIEERKTMQKNLEARKEDLNKSYNLFAKIMDDATDNVPKRVFGAGCDVPSKDWDKEECMQQLPLTSMEDSINGRPSSNDEDILTRPLTELTSAEAAEEICSQLDRKLAGEEEALRQLLCDLENENEILYSIETQIKYAESISVEDSQSQMVCASLLNDLISDVIYKDITEMGPNSYPLGPIESDEEYTYSEEPKLEKMVPPHLENPAGGKSLRECVDTFKEFFASKGNDKPRQESHTHLEKIRAAKALLKSKSLAEFSKDTPESLDAQLAKDEDRRKRHVAASAGRCFAKREKYDDTLEVVDNRLMVVKKDTGELEELPPPPELISDSESEKEVEEDDDAYDTAEETLQEYPRVPWTTPYKPKPRKAAEHLVNEAMQRVLAEQFSELPDDTKENEPQEDEFFSLEAKETFGNLDSEFFQKLDLDKVTTANNAEAATECMRSYNELKACMKSGSTELQLTSEENEMLQEMLSSNEDLEAKHKSNDDPLVERDNELLNKMMQRMKEHEERARELQEQLEKEKEEENSGPIKLSMGEGSMLYQRWSPLSLTEIIDPQAEEGGRQAEEGGAQQEEGGAQSEEGDDQAGVPQAEEGVTQGEESVLQEEETHAENGVAQAEGRVLQSPVIYPIIGYEDIDDDDAASDFTTDYSSDDEVAVVVPPKISPAMLKAYYYDGFEEDMRMVRENEARTRRGLRAIMQKEKQMWKDNEEEMAADMAPSASPKEEHIPEVKSETETAKPTVETAKDKWAKIASRLNEFLDPEAMEQLESHEFGESDGEDDVDLTGLQNYDEESETECESALKETTEIGDSEKQENKTQDETLDPKDTEAITDEWSPYQTSFEENRTAFCDRHNKLTMITEQTSDVGDPETETTKLICQWEKIIPEDSKIGDGPTEKFLDQKAQDNTENTDERPENPKNFITLDYFVDTEPSESLEDTEATETPEVSTEQTLKTEQMEFNLDVLNDDGDVVIKEVTVEAQVTYQ.

LRR repeat units follow at residues 38 to 60 (RLND…DEYT), 61 to 82 (ELKS…TKLT), 83 to 104 (KLKC…EFNR), 105 to 126 (ELDT…GTDI), 129 to 150 (VLNT…AALV), and 154 to 175 (TLSV…KIFE). Residues 189-227 (PVVSRLPQYRKTLILACKELTYLDSRPVFPRDRACAEAW) form the LRRCT domain. 11 disordered regions span residues 245–420 (AERR…SEMD), 560–587 (SSDV…VKSQ), 859–878 (FSKD…EDRR), 913–942 (DTGE…DDDA), 1073–1092 (SSNE…LVER), 1101–1137 (MQRM…MGEG), 1150–1218 (TEII…QAEG), 1305–1345 (KDNE…TAKD), 1358–1438 (LDPE…PYQT), 1484–1517 (EDSK…NPKN), and 1529–1548 (PSES…STEQ). A compositionally biased stretch (low complexity) spans 313 to 327 (ESQASEHSTTSSTSA). Residues 339–392 (HIAERISNRRVKPLEGRPKVLYDEAASGDEKAVTTTDSKKDSNAEDLPELKDIT) show a composition bias toward basic and acidic residues. Over residues 409 to 420 (TLLQSDSGSEMD) the composition is skewed to polar residues. A compositionally biased stretch (acidic residues) spans 572-582 (ESDEEPTEEEM). Over residues 928–942 (SDSESEKEVEEDDDA) the composition is skewed to acidic residues. 2 stretches are compositionally biased toward basic and acidic residues: residues 1078 to 1092 (LEAK…LVER) and 1103 to 1125 (RMKE…KEEE). The span at 1166-1178 (EGGAQQEEGGAQS) shows a compositional bias: low complexity. Composition is skewed to basic and acidic residues over residues 1321–1335 (PKEE…ETET), 1398–1427 (SALK…KDTE), and 1484–1514 (EDSK…RPEN). Over residues 1529–1540 (PSESLEDTEATE) the composition is skewed to acidic residues.

Belongs to the DNAAF1 family.

The protein resides in the cell projection. It localises to the cilium. Its function is as follows. Cilium-specific protein required for cilia structures. This Drosophila pseudoobscura pseudoobscura (Fruit fly) protein is Dynein axonemal assembly factor 1 homolog (dtr).